Here is a 93-residue protein sequence, read N- to C-terminus: Large ribosomal subunit protein uL23 (93 aa).

It belongs to the universal ribosomal protein uL23 family. In terms of assembly, part of the 50S ribosomal subunit. Contacts protein L29, and trigger factor when it is bound to the ribosome.

Its function is as follows. One of the early assembly proteins it binds 23S rRNA. One of the proteins that surrounds the polypeptide exit tunnel on the outside of the ribosome. Forms the main docking site for trigger factor binding to the ribosome. The protein is Large ribosomal subunit protein uL23 of Campylobacter jejuni subsp. jejuni serotype O:2 (strain ATCC 700819 / NCTC 11168).